Consider the following 380-residue polypeptide: Cytochrome b (380 aa).

The next 4 membrane-spanning stretches (helical) occupy residues 34–54 (FGSL…LLAM), 78–99 (WLIR…YLHI), 114–134 (WNTG…GYVL), and 179–199 (FFAL…IHLT). Positions 84 and 98 each coordinate heme b. Heme b-binding residues include H183 and H197. H202 is an a ubiquinone binding site. 4 helical membrane-spanning segments follow: residues 227–247 (LKDA…ALFS), 289–309 (LGGV…PLLH), 321–341 (LSQL…WIGS), and 348–368 (FIII…ILFP).

This sequence belongs to the cytochrome b family. The cytochrome bc1 complex contains 11 subunits: 3 respiratory subunits (MT-CYB, CYC1 and UQCRFS1), 2 core proteins (UQCRC1 and UQCRC2) and 6 low-molecular weight proteins (UQCRH/QCR6, UQCRB/QCR7, UQCRQ/QCR8, UQCR10/QCR9, UQCR11/QCR10 and a cleavage product of UQCRFS1). This cytochrome bc1 complex then forms a dimer. It depends on heme b as a cofactor.

It localises to the mitochondrion inner membrane. Functionally, component of the ubiquinol-cytochrome c reductase complex (complex III or cytochrome b-c1 complex) that is part of the mitochondrial respiratory chain. The b-c1 complex mediates electron transfer from ubiquinol to cytochrome c. Contributes to the generation of a proton gradient across the mitochondrial membrane that is then used for ATP synthesis. The polypeptide is Cytochrome b (MT-CYB) (Oceanodroma tethys (Wedge-rumped storm-petrel)).